A 482-amino-acid polypeptide reads, in one-letter code: UDP-N-acetylmuramate--L-alanine ligase (482 aa).

123 to 129 (GTHGKTT) is an ATP binding site.

This sequence belongs to the MurCDEF family.

It localises to the cytoplasm. It carries out the reaction UDP-N-acetyl-alpha-D-muramate + L-alanine + ATP = UDP-N-acetyl-alpha-D-muramoyl-L-alanine + ADP + phosphate + H(+). Its pathway is cell wall biogenesis; peptidoglycan biosynthesis. Its function is as follows. Cell wall formation. In Pseudomonas putida (strain ATCC 700007 / DSM 6899 / JCM 31910 / BCRC 17059 / LMG 24140 / F1), this protein is UDP-N-acetylmuramate--L-alanine ligase.